We begin with the raw amino-acid sequence, 830 residues long: FYN-binding protein 1 (830 aa).

Positions 1-501 are disordered; sequence MDGKTDVKSL…REKKEQELRK (501 aa). Position 13 is an N6-acetyllysine (lysine 13). Polar residues predominate over residues 15-55; it reads NTGSNPTEEVSTSSRPFKVAGQNSPSGIQSKKNLFDNQGNA. Phosphoserine is present on residues serine 38 and serine 56. Residues 79-89 are compositionally biased toward basic and acidic residues; it reads TYEEKSEKEPK. Serine 233 bears the Phosphoserine mark. 2 stretches are compositionally biased toward basic and acidic residues: residues 248–259 and 284–296; these read PAKEDPEDKDHG and NSEE…KTDI. Residue serine 329 is modified to Phosphoserine. A compositionally biased stretch (basic and acidic residues) spans 330–339; sequence QEKEGDKDSA. 2 stretches are compositionally biased toward pro residues: residues 344 to 362 and 391 to 407; these read KPLP…PSRP and LPPP…PLPA. The interval 347–447 is interaction with SKAP1; it reads PPLSVLGPPP…QDGVMHSDGT (101 aa). Residues 450-464 are compositionally biased toward acidic residues; the sequence is LEEEQESDGEMYEDI. Residue serine 456 is modified to Phosphoserine. Positions 461-464 match the SH2-binding motif; it reads YEDI. Positions 465 to 500 are enriched in basic and acidic residues; sequence ESSKERDKKREKEEKKRLELERKEQKEREKKEQELR. Residues 465–502 adopt a coiled-coil conformation; sequence ESSKERDKKREKEEKKRLELERKEQKEREKKEQELRKK. The short motif at 479 to 486 is the Nuclear localization signal element; it reads KKRLELER. The region spanning 510–571 is the SH3 1 domain; sequence QVIHHAKACC…KTTAVKIDYD (62 aa). Tyrosine 570 carries the post-translational modification Phosphotyrosine. Residue serine 572 is modified to Phosphoserine. The short motif at 595-598 is the SH2-binding; to LCP2 element; the sequence is YDDV. Disordered stretches follow at residues 601-646 and 660-739; these read QDAP…DEKT and KDER…EKEE. The segment covering 621 to 636 has biased composition (acidic residues); it reads ADDDIYDGIEEEDADD. The SH2-binding; to FYN signature appears at 626 to 629; that stretch reads YDGI. Residues 660-675 are compositionally biased toward basic and acidic residues; that stretch reads KDERKKSIREKPKVSE. Acidic residues predominate over residues 693-703; it reads VGEEVYDDVDA. Tyrosine 698 carries the phosphotyrosine modification. The span at 722-739 shows a compositional bias: basic and acidic residues; it reads TKAEEKDPKKLKKQEKEE. Positions 732 to 739 match the Nuclear localization signal motif; that stretch reads LKKQEKEE. Residues 747–815 enclose the SH3 2 domain; it reads KYDGEIRVLY…LRSYLVDNDG (69 aa).

In terms of assembly, part of a complex consisting of SKAP2, FYB1 and PTPNS1. Part of a complex consisting of SKAP2, FYB1 and LILRB3. Part of a complex consisting of SKAP1, FYB1 and CLNK. Interacts with CLNK (via its SH2 domain) and FYN; this interaction allows SKAP1 and FYB1 to recruit FYN to the complex, thus promoting the phosphorylation of CLNK by FYN. Interacts with FYN. Interacts with LCP2. Interacts with SKAP1. Interacts with SKAP2. Interacts with FASLG. Interacts with EVL. Interacts with TMEM47. Interacts with LCK. T-cell receptor ligation leads to increased tyrosine phosphorylation.

The protein resides in the cytoplasm. The protein localises to the nucleus. It localises to the cell junction. Its function is as follows. Acts as an adapter protein of the FYN and LCP2 signaling cascades in T-cells. May play a role in linking T-cell signaling to remodeling of the actin cytoskeleton. Modulates the expression of IL2. Involved in platelet activation. Prevents the degradation of SKAP1 and SKAP2. May be involved in high affinity immunoglobulin epsilon receptor signaling in mast cells. This chain is FYN-binding protein 1, found in Rattus norvegicus (Rat).